Here is a 780-residue protein sequence, read N- to C-terminus: ATP-dependent 6-phosphofructokinase, muscle type (780 aa).

An N-acetylthreonine modification is found at threonine 2. The interval 2–390 (THEEHHAAKT…NWEVYKLLAH (389 aa)) is N-terminal catalytic PFK domain 1. ATP is bound by residues glycine 25, 88 to 89 (RC), and 118 to 121 (GDGS). Aspartate 119 is a binding site for Mg(2+). Serine 133 is subject to Phosphoserine. Residues 164–166 (SID), arginine 201, 208–210 (MGR), glutamate 264, arginine 292, and 298–301 (HVQR) each bind substrate. The active-site Proton acceptor is aspartate 166. Serine 377 is modified (phosphoserine). The interdomain linker stretch occupies residues 391-401 (IRPPVSKSGSH). The segment at 402–780 (TVAVMNVGAP…SRKRSGEAPA (379 aa)) is C-terminal regulatory PFK domain 2. Beta-D-fructose 2,6-bisphosphate contacts are provided by residues arginine 471 and 528 to 532 (TVSNN). A glycan (O-linked (GlcNAc) serine) is linked at serine 530. Lysine 557 is subject to N6-(2-hydroxyisobutyryl)lysine. Residues arginine 566, 573 to 575 (MGG), glutamate 629, arginine 655, and 661 to 664 (HMQQ) each bind beta-D-fructose 2,6-bisphosphate. The residue at position 667 (serine 667) is a Phosphoserine. Arginine 735 contributes to the beta-D-fructose 2,6-bisphosphate binding site. Serine 775 carries the phosphoserine modification.

It belongs to the phosphofructokinase type A (PFKA) family. ATP-dependent PFK group I subfamily. Eukaryotic two domain clade 'E' sub-subfamily. As to quaternary structure, homo- and heterotetramers. Phosphofructokinase (PFK) enzyme functions as a tetramer composed of different combinations of 3 types of subunits, called PFKM (M), PFKL (L) and PFKP (P). The composition of the PFK tetramer differs according to the tissue type it is present in. The kinetic and regulatory properties of the tetrameric enzyme are dependent on the subunit composition, hence can vary across tissues. Interacts (via C-terminus) with HK1 (via N-terminal spermatogenic cell-specific region). The cofactor is Mg(2+). Post-translationally, glcNAcylation decreases enzyme activity.

It is found in the cytoplasm. The catalysed reaction is beta-D-fructose 6-phosphate + ATP = beta-D-fructose 1,6-bisphosphate + ADP + H(+). It participates in carbohydrate degradation; glycolysis; D-glyceraldehyde 3-phosphate and glycerone phosphate from D-glucose: step 3/4. Allosterically activated by ADP, AMP, or fructose 2,6-bisphosphate, and allosterically inhibited by ATP or citrate. Catalyzes the phosphorylation of D-fructose 6-phosphate to fructose 1,6-bisphosphate by ATP, the first committing step of glycolysis. The chain is ATP-dependent 6-phosphofructokinase, muscle type (PFKM) from Equus caballus (Horse).